A 163-amino-acid chain; its full sequence is UPF0262 protein RPC_4416 (163 aa).

The protein belongs to the UPF0262 family.

This Rhodopseudomonas palustris (strain BisB18) protein is UPF0262 protein RPC_4416.